We begin with the raw amino-acid sequence, 404 residues long: NADH-quinone oxidoreductase subunit D 2 (404 aa).

The protein belongs to the complex I 49 kDa subunit family. As to quaternary structure, NDH-1 is composed of 14 different subunits. Subunits NuoB, C, D, E, F, and G constitute the peripheral sector of the complex.

It localises to the cell inner membrane. The enzyme catalyses a quinone + NADH + 5 H(+)(in) = a quinol + NAD(+) + 4 H(+)(out). NDH-1 shuttles electrons from NADH, via FMN and iron-sulfur (Fe-S) centers, to quinones in the respiratory chain. The immediate electron acceptor for the enzyme in this species is believed to be ubiquinone. Couples the redox reaction to proton translocation (for every two electrons transferred, four hydrogen ions are translocated across the cytoplasmic membrane), and thus conserves the redox energy in a proton gradient. This is NADH-quinone oxidoreductase subunit D 2 from Rhizobium meliloti (strain 1021) (Ensifer meliloti).